Reading from the N-terminus, the 330-residue chain is Phenylalanine--tRNA ligase alpha subunit (330 aa).

Mg(2+) is bound at residue Glu-255.

This sequence belongs to the class-II aminoacyl-tRNA synthetase family. Phe-tRNA synthetase alpha subunit type 1 subfamily. In terms of assembly, tetramer of two alpha and two beta subunits. Mg(2+) is required as a cofactor.

It localises to the cytoplasm. The catalysed reaction is tRNA(Phe) + L-phenylalanine + ATP = L-phenylalanyl-tRNA(Phe) + AMP + diphosphate + H(+). The chain is Phenylalanine--tRNA ligase alpha subunit from Acinetobacter baumannii (strain AYE).